The following is a 123-amino-acid chain: Small ribosomal subunit protein uS12 (123 aa).

Asp89 is subject to 3-methylthioaspartic acid.

Belongs to the universal ribosomal protein uS12 family. In terms of assembly, part of the 30S ribosomal subunit. Contacts proteins S8 and S17. May interact with IF1 in the 30S initiation complex.

With S4 and S5 plays an important role in translational accuracy. Its function is as follows. Interacts with and stabilizes bases of the 16S rRNA that are involved in tRNA selection in the A site and with the mRNA backbone. Located at the interface of the 30S and 50S subunits, it traverses the body of the 30S subunit contacting proteins on the other side and probably holding the rRNA structure together. The combined cluster of proteins S8, S12 and S17 appears to hold together the shoulder and platform of the 30S subunit. In Rhodopseudomonas palustris (strain BisA53), this protein is Small ribosomal subunit protein uS12.